The following is a 552-amino-acid chain: uncharacterized protein (552 aa).

A run of 4 helical transmembrane segments spans residues 127 to 147 (AIML…ISLL), 160 to 180 (LIIV…YINI), 393 to 413 (LTKQ…LSAV), and 517 to 537 (VIDS…FICI).

The protein resides in the membrane. This is an uncharacterized protein from Saccharomyces cerevisiae (strain ATCC 204508 / S288c) (Baker's yeast).